The chain runs to 78 residues: Conotoxin ba1890.8 (78 aa).

The signal sequence occupies residues Met-1–Ala-22. The propeptide occupies His-23–Arg-61. The tract at residues Ile-25–Ser-78 is disordered. Residues Asn-34 to Glu-43 show a composition bias toward polar residues. Basic and acidic residues predominate over residues Ile-47–His-72. Gln-62 carries the pyrrolidone carboxylic acid modification.

The protein belongs to the conotoxin H superfamily. Expressed by the venom duct.

The protein localises to the secreted. In terms of biological role, probable toxin. This chain is Conotoxin ba1890.8, found in Conus bayani (Bayan's cone).